Here is a 155-residue protein sequence, read N- to C-terminus: MNLEIYLTGKVKTKFILEGVEQYLKWIRPYHKIKITSFPLAGSTSANRDQIKKKEGERYLKALQNEKNVVVLHERGEELSSMEFATFIKKWQNSGTRKLIFIIGGPLGFSDNVLSQNWKKLSLSRMTFTHEMALLVLLEQLYRAETINRGMIYHY.

S-adenosyl-L-methionine-binding positions include leucine 72, glycine 104, and leucine 123–phenylalanine 128.

It belongs to the RNA methyltransferase RlmH family. Homodimer.

It is found in the cytoplasm. The catalysed reaction is pseudouridine(1915) in 23S rRNA + S-adenosyl-L-methionine = N(3)-methylpseudouridine(1915) in 23S rRNA + S-adenosyl-L-homocysteine + H(+). Its function is as follows. Specifically methylates the pseudouridine at position 1915 (m3Psi1915) in 23S rRNA. This Kosmotoga olearia (strain ATCC BAA-1733 / DSM 21960 / TBF 19.5.1) protein is Ribosomal RNA large subunit methyltransferase H.